Reading from the N-terminus, the 238-residue chain is MEEQDARVPALEPFRVEQAPPVIYYVPDFISKEEEEYLLRQVFNAPKPKWTQLSGRKLQNWGGLPHPRGMVPERLPPWLQRYVDKVSNLSLFGGLPANHVLVNQYLPGEGIMPHEDGPLYYPTVSTISLGSHTVLDFYEPRRPEDDDPTEQPRPPPRPTTSLLLEPRSLLVLRGPAYTRLLHGIAAARVDALDAASSPPNAAACPSARPGACLVRGTRVSLTIRRVPRVLRAGLLLGK.

The Fe2OG dioxygenase domain maps to 96-227; that stretch reads PANHVLVNQY…RVSLTIRRVP (132 aa). The 2-oxoglutarate site is built by N103 and Y105. Positions 114 and 116 each coordinate Fe cation. The tract at residues 138–161 is disordered; that stretch reads YEPRRPEDDDPTEQPRPPPRPTTS. Residue H182 participates in Fe cation binding. 2-oxoglutarate-binding residues include R218 and S220.

This sequence belongs to the alkB family. As to quaternary structure, interacts with VCPKMT. It depends on Fe(2+) as a cofactor. Widely expressed, with highest expression in testis and pancreas.

It localises to the cytoplasm. The protein localises to the nucleus. Its function is as follows. Probable Fe(2+)/2-oxoglutarate-dependent dioxygenase involved in oxidative demethylation of nucleic acids. Binds nucleic acids with a preference for ssDNA or ssRNA to other types of DNAs. May play a role in nucleic acid damage repair. This is Probable RNA/DNA demethylase ALKBH6 from Homo sapiens (Human).